Consider the following 3470-residue polypeptide: MFRIGRRQLWKQSVTRVLTQRLKEEKEAKRARLDGRHDYLFAIVASCLDLNKPEVEDALLEGNQIERIDQLFAVGGLRHLMFYYQDVEGAEAGQFGSSGGVNPASGKMKKPKVFVTEGKDVALMGACVFFTRADPSKAITAENIHREVSFNTLDTADGGLLNSVRRLLSDIFIPALRASSHGWGELEGLQDASSIQQEFLSSLEGFVGILSGAQNSLKEKVNLQKCDIVELKSLKEPMDYLALASNPETVEKVECCMRVWIKQMEQILAENNQLRKEADDVGPRAELEHWKKRLSKFNYLLDQLKSPDVKAVLAMLAAAKSKLLKVWRDADIRVTDAANEAKDNVKYLYTLEKCCDPLYSSDPVTMVDAIPTLINAIKMIYSISHYYNTSERITSLFVKVTNQMISACKAHITNNGTATIWSQPQDIVMQKIAAAIKLKQGYQCCFQETKQKLKQNPSEKQFDFSEMYIFGKFETFHQRLAKIMDIFTTFKTYSVLQDSKIEGLEDMVTKYQDVVAGIKKKEYNFLDQRKMDFDQDYDEFCKQTNELHSELQRFMDTTFEKIQSTRQALSTLKKFERLNIPNLGIEAKYQIVFQNFGTDIDMISKLYTKQKYDPPLARDQPPIAGKILWARQLFHRLEQPMQLFQQHPFVLRTVEAKPVIRSYNRIAKVLLEFEVLYHRAWLQQIEEIHVGLEASLLVKAPGTGQLFVNFDPQILILFRETQCMSQMGLPVSPFAAALFEKRDMYKKNFSDMKMMLSEYQRVKLKMPPAIEQLMLPHLARVDEALQPGLAVLTWTSLNIGTYLENAFEKIKDLELLLDRINDLIEFRIHAILEEMSSVALCQLPQDDPLTCEEFLQMTKDLCVNGAQKLHFKSSLVEEAVNELINMLLDVDVLPEEASEKVRHENASPNGDTSGGGEGCAEALASSFNAGTSSLPLTTIARKKKEMEVLEEARELLSYFNHQNTDALLKVTRNTLEAIRRRIHFSHMINFRDSKGASKVKQNHLPIFRASVTLAIPNISMTPALEDIQQTLNKAVECIISVPKGVRQWSSELLSKRKMRERKMAAVQSNEDSDSDTEVEESELQETLELASVNLPIPVQTQNYYKNISDNKEIVKLVSVLSTVISSTKKEVITSMDRFKCYNHIWQKEKEDTIMTFIAQNPLLSEFESRILYFQSLEQEINAEPEYICVGSIALYTADLKFSLTAETKAWMMVLGRHCNRKYRSEMENIFTVVEEFQKKLNRPIKDLDDIRIAMAALKEIREQQISTDFQVGPIEESYALLNKYGLLVAKEEMDKVDTLRYAWEKLLARASDVQNELGALQPSFRKELISTVEVFLQDCQQFYLDYDLNGPMVSGLKPQEASDRLIIFQNQFDNIYRKYITYTGGEELFGLPVTQYPQLLEIKKQLNLLQKIYSLYNNVIETVNSYQDTLWSEVNIEKINSELLEFQNRCRKLPRALKDWQAFLDMKKTIDDFSECCPLLEYMASNAMVERHWQRITTLTGHSLDVGNETFKLRNIMEVPLLKYKEEIEDICISAVKERDIEQKLKQVINEWDNKTLTFSSFKTRGELLLRGDSTSEVIASMEDSLMLLGSLLSNRYNMPFKAQIQNWVQCLSNSTDIIENWMTVQNLWIYLEAVFVGGDIAKQLPKEAKRFSNIDKSWVKIMTRAHEIPNVVQCCVGDETMGQLLPHLLDQLEICQKSLTGYLEKKRLCFPRFFFVSDPALLEILGQASDSHTIQAHLLNVFDNIKTVKFHDKIYDRILSISSREGETIELDKPVMAEGNVEVWLNSLLEESQSSLHLVIRQAAANIQESGFQLIEFLSSFPAQVGLLGIQMLWTRDSEEALQNAKFDKKIMQKTNQSFLELLNMLIEMTTKDLSSMERVKYETLITIHVHQRDIFDDLCHMHVKSPTDFEWLKQCRFYFKEDSDKTMIHITDVAFTYQNEFLGCTDRLVITPLTDRCYITLAQALGMSMGGAPAGPAGTGKTETTKDMGRCLGKYVVVFNCSDQMDFRGLGRIFKGLAQSGSWGCFDEFNRIDLPVLSVAAQQISIILTCKKEHKKSFIFTDGDNVTMNPEFGLFLTMNPGYAGRQELPENLKINFRSVAMMVPDRQIIIRVKLASCGFIDNVVLARKFFTLYQLCEEQLSKQVHYDFGLRNILSVLRTLGAAKRASHTDTESTIVMRVLRDMNLSKLIDEDEPLFLSLIEDLFPNILLDKAGYPELETAISKQVEEAGLINHPPWKLKVIQLFETQRVRHGMMTLGPSGSGKTSCIHTLMKAMTDCGKPHREMRMNPKAITAPQMFGRLDVATNDWTDGIFSTLWRKTLKAKKGEHIWIVLDGPVDAIWIENLNSVLDDNKTLTLANGDRIPMAPNCKIVFEPHNIDNASPATVSRNGMVFMSSSVLDWSPILEGFLKRRSPQEAEILRQLYAETFPDLYRFSIQNLEFKMEILEAFVITQSTHMLQGLIPTKEQAGDVDPEHLGRLFVFAMMWSVGAVLELEGRRRMELWLRSREGPTLHLPQLTDPGDTMFDYYVAPDGTWRHWSMCIPEYVYPPDTTPEYGSILVPNVDNVRTDFLIKTIAKQGKAVLLIGEQGTAKTVIIKGFMSKFDPESHTVKNLNFSSATTPLMFQRTIESYVDKRMGTTYGPPAGKKMAVFIDDLNMPVINEWGDQVTNEIVRQLMEQNGFYNLEKPGEFTSIVDIQFLAAMIHPGGGRNDIPQRLKRQFSIFNCTLPSDASMDKIFGVIGEGYYCAQRGFSKEVQDAVIKLVPLTRRLWQMTKLKMLPTPAKFHYVFNLRDLSRIWQGMLNITSEVIKDTDELLRLWKHECKRVIADRFSMSSDVTWFDKAVVSLVEEEFGEEKTPVVDCGVDAYFVDFLRDAPEATGETPEETDAEMPKLYEPIASLNHLQERLSVFLQLYNESIRGTGMDMVFFRDAMVHLVKISRVIRTPRGNALLVGVGGSGKQSLTRLASFIAGYTSFQITLTRSYNTSNLMEDLKVLYRTAGQQGKGITFIFTDNEIKEESFLEYMNNVLSSGEVSNLFARDEIDEINSDLTSIMKKEHPKRPPTNDNLYEYFMSRVRGNLHIVLCFSPVGEKFRNRALKFPALISGCTIDWFSRWPKDALVAVSEHFLSSYNIDCTAEIKKELVQCMGSFQDGVAEKCADYFQRFRRSTHVTPKSYLSFIQGYKFIYEEKHVEVQSLANRMNTGLEKLKEASESVAALSQELAVKEKELQVANEKADMVLKEVTMKAQAAEKVKAEVQKVKDKAQAIVDSISKDKAIAEEKLEAAKPALEEAEAALQTIKPSDIATVRTLGRPPHLIMRIMDCVLLLFHRRVNAVKIDLDKSCTVPSWQESLKLMTAGNFLQNLQQFPKDTINEEVIEFLSPYFEMSDYNIETAKRVCGNVAGLCSWTKAMASFFSINKEVLPLKANLIVQENRHALAMQDLQKAQAELDDKQAELDVVQAEYEQAMTEKQ.

Positions 1–1938 (MFRIGRRQLW…MIHITDVAFT (1938 aa)) are stem. Residues 899 to 918 (EKVRHENASPNGDTSGGGEG) are disordered. AAA stretches follow at residues 1939-2161 (YQNE…VLRT), 2221-2440 (TAIS…IQNL), 2547-2800 (VYPP…IWQG), and 2913-3167 (LYNE…FRRS). Residues 1977 to 1984 (GPAGTGKT) and 2259 to 2266 (GPSGSGKT) contribute to the ATP site. 2 coiled-coil regions span residues 3207 to 3241 (LKEA…VLKE) and 3434 to 3468 (HALA…AMTE).

The protein belongs to the dynein heavy chain family. In terms of assembly, interacts with DNAL1. Consists of at least two heavy chains and a number of intermediate and light chains.

The protein localises to the cytoplasm. The protein resides in the cytoskeleton. Its subcellular location is the cilium axoneme. In terms of biological role, force generating protein of respiratory cilia. Produces force towards the minus ends of microtubules. Dynein has ATPase activity; the force-producing power stroke is thought to occur on release of ADP. Required for structural and functional integrity of the cilia of ependymal cells lining the brain ventricles. This chain is Dynein axonemal heavy chain 5, found in Rattus norvegicus (Rat).